We begin with the raw amino-acid sequence, 424 residues long: UPF0597 protein Shew185_3080 (424 aa).

Belongs to the UPF0597 family.

The polypeptide is UPF0597 protein Shew185_3080 (Shewanella baltica (strain OS185)).